Reading from the N-terminus, the 607-residue chain is Branchpoint-bridging protein (607 aa).

2 stretches are compositionally biased toward polar residues: residues 1 to 15 and 35 to 45; these read MSWR…NNIP and VTPSAPSSVTN. Disordered regions lie at residues 1-92 and 134-155; these read MSWR…TENK and VPAD…GRRV. Residues 46–76 show a composition bias toward basic and acidic residues; the sequence is GDRDRDRDGPVYSNDRDVKRGRSPERSEDGP. The 81-residue stretch at 201 to 281 folds into the KH domain; the sequence is YVPVNDYPEI…EKVNKAKKLI (81 aa). 2 consecutive CCHC-type zinc fingers follow at residues 319-336 and 344-361; these read QACQ…DCPE and IICR…DCPD. 2 disordered regions span residues 363 to 390 and 407 to 607; these read QRGA…GGDA and AAPA…PPGA. A compositionally biased stretch (gly residues) spans 373–389; it reads PGAGRTAGRIGSSGGGD. The segment covering 472-500 has biased composition (basic and acidic residues); that stretch reads ARDRNERRHDDRDRGDSYYGGDRRHDDYG. The segment covering 521–533 has biased composition (low complexity); it reads SAPAIPTAPAYPG. The span at 534-545 shows a compositional bias: gly residues; it reads AYGGYPGYGAPP. 2 stretches are compositionally biased toward pro residues: residues 550–563 and 581–607; these read APPP…PGAP and APPP…PPGA.

It belongs to the BBP/SF1 family.

The protein localises to the nucleus. Functionally, necessary for the splicing of pre-mRNA. Has a role in the recognition of the branch site (5'-UACUAAC-3'), the pyrimidine tract and the 3'-splice site at the 3'-end of introns. The sequence is that of Branchpoint-bridging protein (bbp-1) from Neurospora crassa (strain ATCC 24698 / 74-OR23-1A / CBS 708.71 / DSM 1257 / FGSC 987).